Here is a 338-residue protein sequence, read N- to C-terminus: Glyceraldehyde-3-phosphate dehydrogenase 2 (338 aa).

NAD(+) is bound by residues 13 to 14, Asp-35, and Arg-80; that span reads RI. D-glyceraldehyde 3-phosphate contacts are provided by residues 151–153, Thr-182, 211–212, and Arg-234; these read SCT and TG. Cys-152 acts as the Nucleophile in catalysis. Asn-316 serves as a coordination point for NAD(+).

It belongs to the glyceraldehyde-3-phosphate dehydrogenase family. As to quaternary structure, homotetramer.

The protein resides in the cytoplasm. The catalysed reaction is D-glyceraldehyde 3-phosphate + phosphate + NAD(+) = (2R)-3-phospho-glyceroyl phosphate + NADH + H(+). The protein operates within carbohydrate degradation; glycolysis; pyruvate from D-glyceraldehyde 3-phosphate: step 1/5. With respect to regulation, inhibited by koningic acid through the interaction of cysteine residues with koningic acid even at very low concentrations. The polypeptide is Glyceraldehyde-3-phosphate dehydrogenase 2 (gpd2) (Trichoderma koningii (Hypocrea koningii)).